Consider the following 82-residue polypeptide: RNA-binding protein Hfq (82 aa).

The Sm domain occupies aspartate 10–valine 69.

Belongs to the Hfq family. Homohexamer.

RNA chaperone that binds small regulatory RNA (sRNAs) and mRNAs to facilitate mRNA translational regulation in response to envelope stress, environmental stress and changes in metabolite concentrations. Also binds with high specificity to tRNAs. The sequence is that of RNA-binding protein Hfq from Albidiferax ferrireducens (strain ATCC BAA-621 / DSM 15236 / T118) (Rhodoferax ferrireducens).